A 212-amino-acid chain; its full sequence is Riboflavin kinase (212 aa).

Residues M1–R87 form an H-T-H motif-like region. Residues G88–L212 are riboflavin kinase. Position 97 to 102 (G97 to A102) interacts with CDP. Residues T124 and N126 each contribute to the Mg(2+) site. Residues T180 and E188 each coordinate FMN. V193–R196 provides a ligand contact to CDP.

The protein belongs to the archaeal riboflavin kinase family. It depends on Mg(2+) as a cofactor.

It carries out the reaction riboflavin + CTP = CDP + FMN + H(+). It functions in the pathway cofactor biosynthesis; FMN biosynthesis; FMN from riboflavin (CTP route): step 1/1. Its function is as follows. Catalyzes the CTP-dependent phosphorylation of riboflavin (vitamin B2) to form flavin mononucleotide (FMN). This Pyrococcus furiosus (strain ATCC 43587 / DSM 3638 / JCM 8422 / Vc1) protein is Riboflavin kinase (ribK).